We begin with the raw amino-acid sequence, 141 residues long: ATP synthase epsilon chain (141 aa).

This sequence belongs to the ATPase epsilon chain family. In terms of assembly, F-type ATPases have 2 components, CF(1) - the catalytic core - and CF(0) - the membrane proton channel. CF(1) has five subunits: alpha(3), beta(3), gamma(1), delta(1), epsilon(1). CF(0) has three main subunits: a, b and c.

It localises to the cell inner membrane. Produces ATP from ADP in the presence of a proton gradient across the membrane. In Methylobacillus flagellatus (strain ATCC 51484 / DSM 6875 / VKM B-1610 / KT), this protein is ATP synthase epsilon chain.